A 186-amino-acid chain; its full sequence is Elongation factor P (186 aa).

Belongs to the elongation factor P family.

It localises to the cytoplasm. Its pathway is protein biosynthesis; polypeptide chain elongation. Its function is as follows. Involved in peptide bond synthesis. Stimulates efficient translation and peptide-bond synthesis on native or reconstituted 70S ribosomes in vitro. Probably functions indirectly by altering the affinity of the ribosome for aminoacyl-tRNA, thus increasing their reactivity as acceptors for peptidyl transferase. This chain is Elongation factor P, found in Shewanella halifaxensis (strain HAW-EB4).